A 496-amino-acid polypeptide reads, in one-letter code: Thiamine transporter 2 (496 aa).

At 1-7 (MDCYRTS) the chain is on the cytoplasmic side. Residues 8-28 (LSSSWIYPTVILCLFGFFSMM) traverse the membrane as a helical segment. At 29 to 53 (RPSEPFLIPYLSGPDKNLTSAEITN) the chain is on the extracellular side. Residue Asn-45 is glycosylated (N-linked (GlcNAc...) asparagine). The helical transmembrane segment at 54 to 74 (EIFPVWTYSYLVLLLPVFVLT) threads the bilayer. The Cytoplasmic portion of the chain corresponds to 75-81 (DYVRYKP). Residues 82–102 (VIILQGISFIITWLLLLFGQG) form a helical membrane-spanning segment. Over 103-110 (VKTMQVVE) the chain is Extracellular. A helical transmembrane segment spans residues 111-131 (FFYGMVTAAEVAYYAYIYSVV). Residues 132-144 (SPEHYQRVSGYCR) lie on the Cytoplasmic side of the membrane. The chain crosses the membrane as a helical span at residues 145–165 (SVTLAAYTAGSVLAQLLVSLA). N-linked (GlcNAc...) asparagine glycosylation is present at Asn-166. Topologically, residues 166 to 169 (NMSY) are extracellular. A helical membrane pass occupies residues 170-190 (FYLNVISLASVSVAFLFSLFL). The Cytoplasmic portion of the chain corresponds to 191–282 (PMPKKSMFFH…YSSKRLFYWS (92 aa)). A helical membrane pass occupies residues 283 to 303 (LWWAFATAGFNQVLNYVQILW). The Extracellular portion of the chain corresponds to 304–316 (DYKAPSQDSSIYN). A helical membrane pass occupies residues 317–337 (GAVEAIATFGGAVAAFAVGYV). Residues 338 to 342 (KVNWD) lie on the Cytoplasmic side of the membrane. Residues 343–363 (LLGELALVVFSVVNAGSLFLM) traverse the membrane as a helical segment. Topologically, residues 364 to 375 (HYTANIWACYAG) are extracellular. The helical transmembrane segment at 376-396 (YLIFKSSYMLLITIAVFQIAV) threads the bilayer. The Cytoplasmic segment spans residues 397 to 405 (NLNVERYAL). A helical membrane pass occupies residues 406–426 (VFGINTFIALVIQTIMTVIVV). At 427–434 (DQRGLNLP) the chain is on the extracellular side. Residues 435–455 (VSIQFLVYGSYFAVIAGIFLM) form a helical membrane-spanning segment. Topologically, residues 456–496 (RSMYITYSTKSQKDVQSPAPSENPDVSHPEEESNIIMSTKL) are cytoplasmic. Residues 468–496 (KDVQSPAPSENPDVSHPEEESNIIMSTKL) are disordered.

The protein belongs to the reduced folate carrier (RFC) transporter (TC 2.A.48) family. Widely expressed but most abundant in placenta, kidney and liver.

The protein resides in the membrane. The catalysed reaction is thiamine(out) + H(+)(in) = thiamine(in) + H(+)(out). It carries out the reaction pyridoxine(out) + n H(+)(out) = pyridoxine(in) + n H(+)(in). With respect to regulation, pyridoxine transport is inhibited by carbonyl cyanide p-trifluoromethoxyphenylhydrazone (FCCP) and carbonyl cyanide m-chlorophenylhydrazone (CCCP). Mediates high affinity thiamine uptake, probably via a proton anti-port mechanism. Has no folate transport activity. Mediates H(+)-dependent pyridoxine transport. This chain is Thiamine transporter 2 (SLC19A3), found in Homo sapiens (Human).